Here is a 293-residue protein sequence, read N- to C-terminus: MPELPEVETVRRGLEPAMAGARIDGFEARRADLRFALQPDLATRLIGQTVKGLGRRAKYLLAELSSGDVLLMHLGMSGSFRVLQGEASGAPGAFHHPRNDDRAHDHVVFRMSNGAVVVFNDPRRFGYMKILAPGEIADEPFLKGLGPEPLGNSFDAAMLASACAGRKTSLKAALLDQRVVAGLGNIYVCEALFGAHLSPKRLAATLATRTGAPTERAERLVEAIRAVLHAAIKAGGSSLRDHRQTSGELGYFQHSFAVYDREGEPCRSKGCDGVVKRFVQNGRSTFWCPKCQK.

Catalysis depends on Pro2, which acts as the Schiff-base intermediate with DNA. The active-site Proton donor is Glu3. The Proton donor; for beta-elimination activity role is filled by Lys58. DNA-binding residues include His104, Arg123, and Arg166. The segment at 257-293 (AVYDREGEPCRSKGCDGVVKRFVQNGRSTFWCPKCQK) adopts an FPG-type zinc-finger fold. The Proton donor; for delta-elimination activity role is filled by Arg283.

Belongs to the FPG family. Monomer. Zn(2+) serves as cofactor.

It carries out the reaction Hydrolysis of DNA containing ring-opened 7-methylguanine residues, releasing 2,6-diamino-4-hydroxy-5-(N-methyl)formamidopyrimidine.. It catalyses the reaction 2'-deoxyribonucleotide-(2'-deoxyribose 5'-phosphate)-2'-deoxyribonucleotide-DNA = a 3'-end 2'-deoxyribonucleotide-(2,3-dehydro-2,3-deoxyribose 5'-phosphate)-DNA + a 5'-end 5'-phospho-2'-deoxyribonucleoside-DNA + H(+). Functionally, involved in base excision repair of DNA damaged by oxidation or by mutagenic agents. Acts as a DNA glycosylase that recognizes and removes damaged bases. Has a preference for oxidized purines, such as 7,8-dihydro-8-oxoguanine (8-oxoG). Has AP (apurinic/apyrimidinic) lyase activity and introduces nicks in the DNA strand. Cleaves the DNA backbone by beta-delta elimination to generate a single-strand break at the site of the removed base with both 3'- and 5'-phosphates. This Rhodopseudomonas palustris (strain BisB18) protein is Formamidopyrimidine-DNA glycosylase.